Here is a 261-residue protein sequence, read N- to C-terminus: uncharacterized protein (261 aa).

An N-terminal signal peptide occupies residues 1–22 (MKYYGKCISYISILILTFFIGG). Cys23 carries the N-palmitoyl cysteine lipid modification. A lipid anchor (S-diacylglycerol cysteine) is attached at Cys23.

This sequence belongs to the staphylococcal tandem lipoprotein family.

It localises to the cell membrane. This is an uncharacterized protein from Staphylococcus epidermidis (strain ATCC 12228 / FDA PCI 1200).